The chain runs to 1241 residues: ATP-dependent helicase/nuclease subunit A (1241 aa).

Residues 12–485 (SQWTDDQWKA…IDLAKNFRSR (474 aa)) form the UvrD-like helicase ATP-binding domain. 33 to 40 (AAAGSGKT) is an ATP binding site. The UvrD-like helicase C-terminal domain occupies 505–805 (GEIDYDADAE…RIMTIHKSKG (301 aa)).

Belongs to the helicase family. AddA subfamily. As to quaternary structure, heterodimer of AddA and AddB/RexB. Mg(2+) serves as cofactor.

It catalyses the reaction Couples ATP hydrolysis with the unwinding of duplex DNA by translocating in the 3'-5' direction.. It carries out the reaction ATP + H2O = ADP + phosphate + H(+). Its function is as follows. The heterodimer acts as both an ATP-dependent DNA helicase and an ATP-dependent, dual-direction single-stranded exonuclease. Recognizes the chi site generating a DNA molecule suitable for the initiation of homologous recombination. The AddA nuclease domain is required for chi fragment generation; this subunit has the helicase and 3' -&gt; 5' nuclease activities. In Bacillus thuringiensis subsp. konkukian (strain 97-27), this protein is ATP-dependent helicase/nuclease subunit A.